Reading from the N-terminus, the 213-residue chain is Orotate phosphoribosyltransferase (213 aa).

Residue K26 coordinates 5-phospho-alpha-D-ribose 1-diphosphate. 34 to 35 (FF) serves as a coordination point for orotate. Residues 72–73 (YK), R99, K100, K103, H105, and 124–132 (DDVITAGTA) contribute to the 5-phospho-alpha-D-ribose 1-diphosphate site. Positions 128 and 156 each coordinate orotate.

Belongs to the purine/pyrimidine phosphoribosyltransferase family. PyrE subfamily. Homodimer. The cofactor is Mg(2+).

The enzyme catalyses orotidine 5'-phosphate + diphosphate = orotate + 5-phospho-alpha-D-ribose 1-diphosphate. Its pathway is pyrimidine metabolism; UMP biosynthesis via de novo pathway; UMP from orotate: step 1/2. In terms of biological role, catalyzes the transfer of a ribosyl phosphate group from 5-phosphoribose 1-diphosphate to orotate, leading to the formation of orotidine monophosphate (OMP). In Escherichia coli O127:H6 (strain E2348/69 / EPEC), this protein is Orotate phosphoribosyltransferase.